A 226-amino-acid chain; its full sequence is MSKKGKKYIAAFSKVDKSKFYSIEDAISLLKEIKFVKFDETIDISINLNLKKNHTVRDTIVLPNQFMKPKRILVFAKGDRADEARAFGATYIGDDDLINKIKSGWDEFDIVVATPDMMKDVGRLGPILGKRGLMPNPKTQTVTNNLKDAINSLKKGRTEFRANKNGVISFSFGKSSMDNAKIKENYDEFIKEVVKKRPSDLKGAFIDSIYISSTMGPSIKIDFVWR.

The protein belongs to the universal ribosomal protein uL1 family. In terms of assembly, part of the 50S ribosomal subunit.

Functionally, binds directly to 23S rRNA. The L1 stalk is quite mobile in the ribosome, and is involved in E site tRNA release. Protein L1 is also a translational repressor protein, it controls the translation of the L11 operon by binding to its mRNA. In Borrelia garinii subsp. bavariensis (strain ATCC BAA-2496 / DSM 23469 / PBi) (Borreliella bavariensis), this protein is Large ribosomal subunit protein uL1.